The following is a 678-amino-acid chain: Zinc finger translocation-associated protein (678 aa).

4 disordered regions span residues Met-1–Asp-100, Leu-182–Gly-250, Gln-329–His-417, and Leu-490–Pro-583. Low complexity predominate over residues Ser-62–Arg-78. Positions Lys-79 to Ala-88 are enriched in basic and acidic residues. Over residues Ala-187 to Gly-201 the composition is skewed to acidic residues. A Glycyl lysine isopeptide (Lys-Gly) (interchain with G-Cter in SUMO2) cross-link involves residue Lys-375. The span at Ala-388–Glu-398 shows a compositional bias: acidic residues. A compositionally biased stretch (pro residues) spans Pro-492–Pro-504. Acidic residues-rich tracts occupy residues Gly-513 to Gly-529 and Ala-543 to Gln-553. A compositionally biased stretch (pro residues) spans Leu-560–Pro-572. The segment covering Arg-573 to Pro-583 has biased composition (basic and acidic residues).

In Homo sapiens (Human), this protein is Zinc finger translocation-associated protein.